Reading from the N-terminus, the 156-residue chain is Small ribosomal subunit protein uS7 (156 aa).

Belongs to the universal ribosomal protein uS7 family. As to quaternary structure, part of the 30S ribosomal subunit. Contacts proteins S9 and S11.

One of the primary rRNA binding proteins, it binds directly to 16S rRNA where it nucleates assembly of the head domain of the 30S subunit. Is located at the subunit interface close to the decoding center, probably blocks exit of the E-site tRNA. In Aromatoleum aromaticum (strain DSM 19018 / LMG 30748 / EbN1) (Azoarcus sp. (strain EbN1)), this protein is Small ribosomal subunit protein uS7.